Here is a 196-residue protein sequence, read N- to C-terminus: Large ribosomal subunit protein bL25 (196 aa).

This sequence belongs to the bacterial ribosomal protein bL25 family. CTC subfamily. Part of the 50S ribosomal subunit; part of the 5S rRNA/L5/L18/L25 subcomplex. Contacts the 5S rRNA. Binds to the 5S rRNA independently of L5 and L18.

In terms of biological role, this is one of the proteins that binds to the 5S RNA in the ribosome where it forms part of the central protuberance. This Treponema pallidum subsp. pallidum (strain SS14) protein is Large ribosomal subunit protein bL25.